The chain runs to 160 residues: MRKVTLTLSAIALALSLNGAAMAKVHMPEVVSQGVTVTELAHQQPIKWVSVAEIEKSLEGQAPMAVGFDIDDTFWFSSPGFYRVKLEYSPNDFSYLKNPEFWEKMNNEWDKFSMPKQVGIDLVQMHLKRGDTVYFITGRTQTKTETCVTKYVQEGLNIPA.

Residues 1–23 form the signal peptide; the sequence is MRKVTLTLSAIALALSLNGAAMA. Asp-69 functions as the Nucleophile in the catalytic mechanism. Residues Asp-69 and Asp-71 each coordinate Mg(2+). The active-site Proton donor is the Asp-71. A substrate-binding site is contributed by 137 to 138; that stretch reads TG.

It belongs to the class B bacterial acid phosphatase family. In terms of assembly, homotetramer. Requires Mg(2+) as cofactor.

The protein localises to the periplasm. It catalyses the reaction a phosphate monoester + H2O = an alcohol + phosphate. Its function is as follows. Dephosphorylates several organic phosphate monoesters. Also has a phosphotransferase activity catalyzing the transfer of low-energy phosphate groups from organic phosphate monoesters to free hydroxyl groups of various organic compounds. The protein is Class B acid phosphatase (aphA) of Proteus mirabilis.